A 360-amino-acid chain; its full sequence is Peptide chain release factor 1 (360 aa).

N5-methylglutamine is present on Q234.

The protein belongs to the prokaryotic/mitochondrial release factor family. In terms of processing, methylated by PrmC. Methylation increases the termination efficiency of RF1.

The protein localises to the cytoplasm. Functionally, peptide chain release factor 1 directs the termination of translation in response to the peptide chain termination codons UAG and UAA. In Clostridium perfringens (strain 13 / Type A), this protein is Peptide chain release factor 1.